We begin with the raw amino-acid sequence, 285 residues long: NADPH-dependent 7-cyano-7-deazaguanine reductase (285 aa).

91 to 93 (IES) serves as a coordination point for substrate. 93-94 (SK) serves as a coordination point for NADPH. Residue Cys-191 is the Thioimide intermediate of the active site. The active-site Proton donor is the Asp-198. 230 to 231 (HE) contributes to the substrate binding site. Residue 259 to 260 (RG) participates in NADPH binding.

This sequence belongs to the GTP cyclohydrolase I family. QueF type 2 subfamily. Homodimer.

It localises to the cytoplasm. The catalysed reaction is 7-aminomethyl-7-carbaguanine + 2 NADP(+) = 7-cyano-7-deazaguanine + 2 NADPH + 3 H(+). It functions in the pathway tRNA modification; tRNA-queuosine biosynthesis. Functionally, catalyzes the NADPH-dependent reduction of 7-cyano-7-deazaguanine (preQ0) to 7-aminomethyl-7-deazaguanine (preQ1). In Legionella pneumophila (strain Lens), this protein is NADPH-dependent 7-cyano-7-deazaguanine reductase.